We begin with the raw amino-acid sequence, 277 residues long: MEIFVRNKPYTGPVKAVVLDWAGTTVDFGCMAPVTAFIEAFALRGVEISASEVRGPMGLMKMDHVRALCGLPSVSERWRELFGRIPNEDDVRLVYGDTVPLMVLSVADHAELIPGLLPAIGYFRGNGIKIGTSTGYTTPMMEVLLPRAEKRGYRPDSVVCSSDVPRGRPFPFMCYRNAIDLEVYPLEAVVKIGDTVSDIREGLNAGMWTIGVSKSGSDLGLTEAELDALPADDLRNRLALVESRFLEAGAHFVVEHIGRCPEIIEEINDLLSQGEVP.

Aspartate 20 functions as the Nucleophile in the catalytic mechanism. Mg(2+) contacts are provided by aspartate 20 and alanine 22. Lysine 61 acts as the Schiff-base intermediate with substrate in catalysis. A Mg(2+)-binding site is contributed by aspartate 194.

This sequence belongs to the HAD-like hydrolase superfamily. PhnX family. In terms of assembly, homodimer. Requires Mg(2+) as cofactor.

It carries out the reaction phosphonoacetaldehyde + H2O = acetaldehyde + phosphate + H(+). In terms of biological role, involved in phosphonate degradation. The polypeptide is Phosphonoacetaldehyde hydrolase (Syntrophobacter fumaroxidans (strain DSM 10017 / MPOB)).